Consider the following 953-residue polypeptide: ALS2 C-terminal-like protein (953 aa).

MORN repeat units follow at residues 358–380 (YEGE…DGRN), 381–403 (HVGN…QASE), 409–431 (YKCH…TDEV), 432–452 (YKGY…SGPQ), 459–479 (YTGH…DGDR), 483–505 (YIGM…AGVC), 506–528 (YQGT…DDSL), and 529–552 (YEGT…NGFT). The region spanning 796–942 (LFPDTQLLEF…IQKEDMRLHR (147 aa)) is the VPS9 domain.

In terms of assembly, homodimer. Forms a heteromeric complex with ALS2. Interacts with ALS2 and RAB5A. As to expression, expressed in heart and kidney.

Its subcellular location is the cytoplasm. In terms of biological role, acts as a guanine nucleotide exchange factor (GEF) for Rab5 GTPase. Regulates the ALS2-mediated endosome dynamics. The protein is ALS2 C-terminal-like protein (ALS2CL) of Homo sapiens (Human).